The following is a 115-amino-acid chain: MGTRLLCWVVLGFLGTDHTGAGVSQSPRYKVAKRGRDVALRCDSISGHVTLYWYRQTLGQGSEVLTYSQSDAQRDKSGRPSGRFSAERPERSVSTLKIQRTEQGDSAVYLCASSL.

The signal sequence occupies residues 1–21 (MGTRLLCWVVLGFLGTDHTGA). In terms of domain architecture, Ig-like spans 22–115 (GVSQSPRYKV…SAVYLCASSL (94 aa)). A disulfide bridge connects residues C42 and C111. The segment at 67-97 (YSQSDAQRDKSGRPSGRFSAERPERSVSTLK) is disordered.

As to quaternary structure, alpha-beta TR is a heterodimer composed of an alpha and beta chain; disulfide-linked. The alpha-beta TR is associated with the transmembrane signaling CD3 coreceptor proteins to form the TR-CD3 (TcR or TCR). The assembly of alpha-beta TR heterodimers with CD3 occurs in the endoplasmic reticulum where a single alpha-beta TR heterodimer associates with one CD3D-CD3E heterodimer, one CD3G-CD3E heterodimer and one CD247 homodimer forming a stable octameric structure. CD3D-CD3E and CD3G-CD3E heterodimers preferentially associate with TR alpha and TR beta chains, respectively. The association of the CD247 homodimer is the last step of TcR assembly in the endoplasmic reticulum and is required for transport to the cell surface.

It is found in the cell membrane. In terms of biological role, v region of the variable domain of T cell receptor (TR) beta chain that participates in the antigen recognition. Alpha-beta T cell receptors are antigen specific receptors which are essential to the immune response and are present on the cell surface of T lymphocytes. Recognize peptide-major histocompatibility (MH) (pMH) complexes that are displayed by antigen presenting cells (APC), a prerequisite for efficient T cell adaptive immunity against pathogens. Binding of alpha-beta TR to pMH complex initiates TR-CD3 clustering on the cell surface and intracellular activation of LCK that phosphorylates the ITAM motifs of CD3G, CD3D, CD3E and CD247 enabling the recruitment of ZAP70. In turn ZAP70 phosphorylates LAT, which recruits numerous signaling molecules to form the LAT signalosome. The LAT signalosome propagates signal branching to three major signaling pathways, the calcium, the mitogen-activated protein kinase (MAPK) kinase and the nuclear factor NF-kappa-B (NF-kB) pathways, leading to the mobilization of transcription factors that are critical for gene expression and essential for T cell growth and differentiation. The T cell repertoire is generated in the thymus, by V-(D)-J rearrangement. This repertoire is then shaped by intrathymic selection events to generate a peripheral T cell pool of self-MH restricted, non-autoaggressive T cells. Post-thymic interaction of alpha-beta TR with the pMH complexes shapes TR structural and functional avidity. The sequence is that of T cell receptor beta variable 7-4 from Homo sapiens (Human).